The following is an 86-amino-acid chain: U15-lycotoxin-Ls1d (86 aa).

An N-terminal signal peptide occupies residues 1-20 (MNSKIFAVLLLLGLLSCVLS). Residues 21–66 (DQYCPKSSITACKKMNIRNDCCKDDDCTGGSWCCATPCGNFCKYPT) form the WAP domain. Cystine bridges form between Cys-24–Cys-54, Cys-32–Cys-58, Cys-41–Cys-53, Cys-42–Cys-80, and Cys-47–Cys-62.

The protein belongs to the venom protein 11 family. 01 (wap-1) subfamily. Contains 5 disulfide bonds. Expressed by the venom gland.

The protein localises to the secreted. In terms of biological role, has antibacterial activity. The sequence is that of U15-lycotoxin-Ls1d from Lycosa singoriensis (Wolf spider).